A 438-amino-acid polypeptide reads, in one-letter code: UDP-N-acetylmuramoylalanine--D-glutamate ligase (438 aa).

112-118 contributes to the ATP binding site; that stretch reads GSNGKST.

The protein belongs to the MurCDEF family.

It localises to the cytoplasm. It catalyses the reaction UDP-N-acetyl-alpha-D-muramoyl-L-alanine + D-glutamate + ATP = UDP-N-acetyl-alpha-D-muramoyl-L-alanyl-D-glutamate + ADP + phosphate + H(+). It functions in the pathway cell wall biogenesis; peptidoglycan biosynthesis. Its function is as follows. Cell wall formation. Catalyzes the addition of glutamate to the nucleotide precursor UDP-N-acetylmuramoyl-L-alanine (UMA). In Shigella boydii serotype 4 (strain Sb227), this protein is UDP-N-acetylmuramoylalanine--D-glutamate ligase.